The chain runs to 425 residues: Enolase (425 aa).

Position 163 (Gln-163) interacts with (2R)-2-phosphoglycerate. Glu-205 acts as the Proton donor in catalysis. Mg(2+) is bound by residues Asp-242, Glu-286, and Asp-313. Residues Lys-338, Arg-367, Ser-368, and Lys-389 each coordinate (2R)-2-phosphoglycerate. Lys-338 (proton acceptor) is an active-site residue.

Belongs to the enolase family. It depends on Mg(2+) as a cofactor.

It localises to the cytoplasm. The protein localises to the secreted. It is found in the cell surface. It catalyses the reaction (2R)-2-phosphoglycerate = phosphoenolpyruvate + H2O. The protein operates within carbohydrate degradation; glycolysis; pyruvate from D-glyceraldehyde 3-phosphate: step 4/5. In terms of biological role, catalyzes the reversible conversion of 2-phosphoglycerate (2-PG) into phosphoenolpyruvate (PEP). It is essential for the degradation of carbohydrates via glycolysis. The sequence is that of Enolase from Helicobacter hepaticus (strain ATCC 51449 / 3B1).